A 436-amino-acid polypeptide reads, in one-letter code: UDP-N-acetylglucosamine 1-carboxyvinyltransferase (436 aa).

A phosphoenolpyruvate-binding site is contributed by Lys22 to Asn23. UDP-N-acetyl-alpha-D-glucosamine is bound at residue Arg96. Cys120 serves as the catalytic Proton donor. Cys120 is subject to 2-(S-cysteinyl)pyruvic acid O-phosphothioketal. Residues Arg125–Leu129, Asp309, and Ile331 contribute to the UDP-N-acetyl-alpha-D-glucosamine site.

The protein belongs to the EPSP synthase family. MurA subfamily.

It localises to the cytoplasm. It carries out the reaction phosphoenolpyruvate + UDP-N-acetyl-alpha-D-glucosamine = UDP-N-acetyl-3-O-(1-carboxyvinyl)-alpha-D-glucosamine + phosphate. Its pathway is cell wall biogenesis; peptidoglycan biosynthesis. Functionally, cell wall formation. Adds enolpyruvyl to UDP-N-acetylglucosamine. The polypeptide is UDP-N-acetylglucosamine 1-carboxyvinyltransferase (Acidobacterium capsulatum (strain ATCC 51196 / DSM 11244 / BCRC 80197 / JCM 7670 / NBRC 15755 / NCIMB 13165 / 161)).